The sequence spans 346 residues: Sulfate/thiosulfate import ATP-binding protein CysA (346 aa).

The ABC transporter domain maps to 3 to 237 (VRVANVRKEF…PNSPFVYGFI (235 aa)). Residue 35 to 42 (GPSGSGKT) participates in ATP binding.

It belongs to the ABC transporter superfamily. Sulfate/tungstate importer (TC 3.A.1.6) family. In terms of assembly, the complex is composed of two ATP-binding proteins (CysA), two transmembrane proteins (CysT and CysW) and a solute-binding protein (CysP).

Its subcellular location is the cell inner membrane. It carries out the reaction sulfate(out) + ATP + H2O = sulfate(in) + ADP + phosphate + H(+). The catalysed reaction is thiosulfate(out) + ATP + H2O = thiosulfate(in) + ADP + phosphate + H(+). Functionally, part of the ABC transporter complex CysAWTP involved in sulfate/thiosulfate import. Responsible for energy coupling to the transport system. The protein is Sulfate/thiosulfate import ATP-binding protein CysA of Mesorhizobium japonicum (strain LMG 29417 / CECT 9101 / MAFF 303099) (Mesorhizobium loti (strain MAFF 303099)).